We begin with the raw amino-acid sequence, 177 residues long: Inorganic pyrophosphatase (177 aa).

Positions 31, 45, and 57 each coordinate substrate. Residues Asp67, Asp72, and Asp104 each coordinate Mg(2+). Residue Tyr142 coordinates substrate.

This sequence belongs to the PPase family. As to quaternary structure, homohexamer. Mg(2+) is required as a cofactor.

It localises to the cytoplasm. It catalyses the reaction diphosphate + H2O = 2 phosphate + H(+). Its function is as follows. Catalyzes the hydrolysis of inorganic pyrophosphate (PPi) forming two phosphate ions. This Neisseria meningitidis serogroup B (strain ATCC BAA-335 / MC58) protein is Inorganic pyrophosphatase.